We begin with the raw amino-acid sequence, 212 residues long: uncharacterized protein (212 aa).

It belongs to the flavoredoxin family. The cofactor is FMN.

This is an uncharacterized protein from Methanothermobacter thermautotrophicus (strain ATCC 29096 / DSM 1053 / JCM 10044 / NBRC 100330 / Delta H) (Methanobacterium thermoautotrophicum).